Reading from the N-terminus, the 233-residue chain is MSKEIPTPYMWSYQPQMGLAAGASQDYSSRMNWLSAGPHMIGRVNGIRATRNQILLEQAALTSTPRSQLNPPNWPAAQVYQENPAPTTVLLPRDAEAEVQMTNSGAQLAGGSRHVRFRGRSSPYSPGPIKRLIIRGRGIQLNDEVVSSLTGLRPDGVFQLGGAGRSSFTPRQAYLTLQSSSSQPRSGGIGTLQFVEEFVPSVYFNPFSGAPGLYPDDFIPNYDAVSESVDGYD.

The residue at position 64 (Thr64) is a Phosphothreonine; by host. A propeptide spanning residues 112–163 (SRHVRFRGRSSPYSPGPIKRLIIRGRGIQLNDEVVSSLTGLRPDGVFQLGGA) is cleaved from the precursor. Ser180 bears the Phosphoserine; by host mark.

Belongs to the adenoviridae hexon-linking protein family. In terms of assembly, interacts with the peripentonal hexons as well as the hexons in the facets. Part of a complex composed of the core-capsid bridging protein, the endosome lysis protein VI and the hexon-linking protein VIII; these interactions bridge the virus core to the capsid. Post-translationally, cleaved by the viral protease during virion maturation. May cause the middle segment to be shed from the capsid.

Its subcellular location is the virion. The protein localises to the host nucleus. Its function is as follows. Structural component of the virion that acts as a cement protein on the capsid interior and which glue the peripentonal hexons and group-of-nine hexons together. The chain is Pre-hexon-linking protein VIII from Homo sapiens (Human).